Consider the following 74-residue polypeptide: Conotoxin VnMEKL-0222 (74 aa).

Residues 1-19 form the signal peptide; that stretch reads MEKLTILLLVAAVLMSTQA. The propeptide occupies 20–46; sequence LIQEKRPKEKIKFLSKRKSIPESWWEG. Disulfide bonds link cysteine 48–cysteine 62, cysteine 55–cysteine 66, and cysteine 61–cysteine 71.

The protein belongs to the conotoxin O2 superfamily. In terms of tissue distribution, expressed by the venom duct.

It is found in the secreted. The sequence is that of Conotoxin VnMEKL-0222 from Conus ventricosus (Mediterranean cone).